Consider the following 511-residue polypeptide: Bifunctional purine biosynthesis protein PurH (511 aa).

An MGS-like domain is found at 1–145; the sequence is MKKRALVSVS…KNHKFVSVIV (145 aa).

This sequence belongs to the PurH family.

It carries out the reaction (6R)-10-formyltetrahydrofolate + 5-amino-1-(5-phospho-beta-D-ribosyl)imidazole-4-carboxamide = 5-formamido-1-(5-phospho-D-ribosyl)imidazole-4-carboxamide + (6S)-5,6,7,8-tetrahydrofolate. It catalyses the reaction IMP + H2O = 5-formamido-1-(5-phospho-D-ribosyl)imidazole-4-carboxamide. The protein operates within purine metabolism; IMP biosynthesis via de novo pathway; 5-formamido-1-(5-phospho-D-ribosyl)imidazole-4-carboxamide from 5-amino-1-(5-phospho-D-ribosyl)imidazole-4-carboxamide (10-formyl THF route): step 1/1. Its pathway is purine metabolism; IMP biosynthesis via de novo pathway; IMP from 5-formamido-1-(5-phospho-D-ribosyl)imidazole-4-carboxamide: step 1/1. The protein is Bifunctional purine biosynthesis protein PurH of Bacillus cereus (strain ATCC 10987 / NRS 248).